A 327-amino-acid chain; its full sequence is Phenylalanine--tRNA ligase alpha subunit (327 aa).

E252 contacts Mg(2+).

It belongs to the class-II aminoacyl-tRNA synthetase family. Phe-tRNA synthetase alpha subunit type 1 subfamily. In terms of assembly, tetramer of two alpha and two beta subunits. Mg(2+) is required as a cofactor.

It localises to the cytoplasm. It catalyses the reaction tRNA(Phe) + L-phenylalanine + ATP = L-phenylalanyl-tRNA(Phe) + AMP + diphosphate + H(+). In Cronobacter sakazakii (strain ATCC BAA-894) (Enterobacter sakazakii), this protein is Phenylalanine--tRNA ligase alpha subunit.